A 343-amino-acid polypeptide reads, in one-letter code: Phosphoglycerate mutase-like protein 2 (343 aa).

A chloroplast-targeting transit peptide spans 1 to 35 (MIHQSMTSNLSFYISSVSHLSSPLPSLSRLSLRCC). The active-site Tele-phosphohistidine intermediate is H65. E177 (proton donor/acceptor) is an active-site residue. A disordered region spans residues 322–343 (MTNYPGTILTGEDASSDIADQK).

The protein belongs to the phosphoglycerate mutase family.

It localises to the plastid. The protein localises to the chloroplast. May play a role in carbohydrates metabolism. This Arabidopsis thaliana (Mouse-ear cress) protein is Phosphoglycerate mutase-like protein 2.